The sequence spans 168 residues: MNKPKTDYAGYACCVICGLIVGIIFTATLLKVVERKLVHTPSIDKTIKDAYIREDCPTDWISYNNKCIHLSTDRKTWEEGRNTCKALNPNSDLIKIETPNELSFLRSLRRGYWVGESEILNQTTPYNFIAKNATKNGNIFVAQRILPNCIRVTLYNNYTTFLSYHYFG.

Topologically, residues 1–9 (MNKPKTDYA) are cytoplasmic. A helical; Signal-anchor for type II membrane protein membrane pass occupies residues 10–30 (GYACCVICGLIVGIIFTATLL). Residues 31–168 (KVVERKLVHT…TTFLSYHYFG (138 aa)) are Extracellular-facing. The 106-residue stretch at 63–168 (YNNKCIHLST…TTFLSYHYFG (106 aa)) folds into the C-type lectin domain.

It belongs to the poxviridae A40 protein family.

The protein localises to the host membrane. This Homo sapiens (Human) protein is Protein A40.